A 205-amino-acid polypeptide reads, in one-letter code: Tumor suppressor candidate gene 1 protein homolog (205 aa).

The segment covering 1–12 has biased composition (low complexity); that stretch reads MWRMRGGATRRG. Positions 1–49 are disordered; it reads MWRMRGGATRRGSCGGEGGGSRGESGRLGRAREGGGGGGGVGWRGRAGG. Positions 13 to 23 are enriched in gly residues; sequence SCGGEGGGSRG. Residues 24–33 are compositionally biased toward basic and acidic residues; that stretch reads ESGRLGRARE. Positions 34-48 are enriched in gly residues; the sequence is GGGGGGGVGWRGRAG. Positions 66 to 110 form a coiled coil; the sequence is LEALRARDERDRQNARLREENARLRLENRRLRRENRSLFRQALRL. Disordered stretches follow at residues 113–149 and 174–205; these read DSGE…SPRA and GARP…RPWL. Residue serine 146 is modified to Phosphoserine. Over residues 196–205 the composition is skewed to basic and acidic residues; that stretch reads HDPDVPRPWL.

This Mus musculus (Mouse) protein is Tumor suppressor candidate gene 1 protein homolog (Tusc1).